We begin with the raw amino-acid sequence, 422 residues long: Enolase (422 aa).

Residue Gln162 coordinates (2R)-2-phosphoglycerate. Glu204 serves as the catalytic Proton donor. Residues Asp241, Glu284, and Asp311 each contribute to the Mg(2+) site. (2R)-2-phosphoglycerate contacts are provided by Lys336, Arg365, Ser366, and Lys387. Residue Lys336 is the Proton acceptor of the active site.

The protein belongs to the enolase family. Component of the RNA degradosome, a multiprotein complex involved in RNA processing and mRNA degradation. It depends on Mg(2+) as a cofactor.

The protein localises to the cytoplasm. Its subcellular location is the secreted. It localises to the cell surface. It catalyses the reaction (2R)-2-phosphoglycerate = phosphoenolpyruvate + H2O. It participates in carbohydrate degradation; glycolysis; pyruvate from D-glyceraldehyde 3-phosphate: step 4/5. Functionally, catalyzes the reversible conversion of 2-phosphoglycerate (2-PG) into phosphoenolpyruvate (PEP). It is essential for the degradation of carbohydrates via glycolysis. The sequence is that of Enolase from Legionella pneumophila (strain Lens).